Reading from the N-terminus, the 64-residue chain is Cytochrome c oxidase subunit 5C-2 (64 aa).

The chain crosses the membrane as a helical span at residues 15 to 34; that stretch reads SVVKELIIGLTLGLAAGGLW.

Belongs to the cytochrome c oxidase subunit 5C family.

It localises to the mitochondrion inner membrane. In terms of biological role, this protein is one of the nuclear-coded polypeptide chains of cytochrome c oxidase, the terminal oxidase in mitochondrial electron transport. The sequence is that of Cytochrome c oxidase subunit 5C-2 from Arabidopsis thaliana (Mouse-ear cress).